Reading from the N-terminus, the 866-residue chain is Protein mono-ADP-ribosyltransferase PARP9 (866 aa).

Position 42 is a phosphoserine (S42). Macro domains are found at residues 109–298 (QRVF…ESIL) and 313–492 (ASTM…TKRS). Residues 635 to 853 (TNQQEKLDKM…YSSGPGMVSS (219 aa)) enclose the PARP catalytic domain.

It belongs to the ARTD/PARP family. Forms a stable complex with E3 ligase DTX3L; the interaction is required for PARP9 mediated ADP-ribosylation of ubiquitin. Interacts (via PARP catalytic domain) with DTX3L (via N-terminus). Forms a complex with STAT1 and DTX3L independently of IFNB1 or IFNG-mediated STAT1 'Tyr-701' phosphorylation. Forms a complex with STAT1, DTX3L and histone H2B H2BC9/H2BJ; the interaction is likely to induce H2BC9/H2BJ ubiquitination. Interacts (via N-terminus) with STAT1. Interacts with PARP14 in IFNG-stimulated macrophages; the interaction prevents PARP14-mediated STAT1 and STAT6 ADP-riboslylation. Interacts with PARP1 (when poly-ADP-ribosylated). ADP-ribosylated by PARP14. In terms of tissue distribution, highly expressed in the thymus and intestine. Expressed in macrophages.

The protein resides in the cytoplasm. Its subcellular location is the cytosol. It is found in the nucleus. The enzyme catalyses [protein]-C-terminal glycine + NAD(+) = [protein]-C-terminal O-(ADP-D-ribosyl)-glycine + nicotinamide. Binding to poly(ADP-ribose) does not affect its activity. Functionally, ADP-ribosyltransferase which, in association with E3 ligase DTX3L, plays a role in DNA damage repair and in immune responses including interferon-mediated antiviral defenses. Within the complex, enhances DTX3L E3 ligase activity which is further enhanced by PARP9 binding to poly(ADP-ribose). In addition, positively regulates DTXL3 protein levels. In association with DTX3L and in presence of E1 and E2 enzymes, mediates NAD(+)-dependent mono-ADP-ribosylation of ubiquitin which prevents ubiquitin conjugation to substrates such as histones. During DNA repair, PARP1 recruits PARP9/BAL1-DTX3L complex to DNA damage sites via PARP9 binding to ribosylated PARP1. Subsequent PARP1-dependent PARP9/BAL1-DTX3L-mediated ubiquitination promotes the rapid and specific recruitment of 53BP1/TP53BP1, UIMC1/RAP80, and BRCA1 to DNA damage sites. In response to DNA damage, PARP9-DTX3L complex is required for efficient non-homologous end joining (NHEJ) but the complex function is restrained by PARP9 activity. Dispensable for B-cell receptor (BCR) assembly through V(D)J recombination and class switch recombination (CSR). In macrophages, positively regulates pro-inflammatory cytokines production in response to IFNG stimulation by suppressing PARP14-mediated STAT1 ADP-ribosylation and thus promoting STAT1 phosphorylation. Also suppresses PARP14-mediated STAT6 ADP-ribosylation. The sequence is that of Protein mono-ADP-ribosyltransferase PARP9 (Parp9) from Mus musculus (Mouse).